The primary structure comprises 686 residues: Putative pentatricopeptide repeat-containing protein At3g49142 (686 aa).

PPR repeat units lie at residues 73-103 (NSSLGVKLMRAYASLKDVASARKVFDEIPER), 104-138 (NVIIINVMIRSYVNNGFYGEGVKVFGTMCGCNVRP), 139-173 (DHYTFPCVLKACSCSGTIVIGRKIHGSATKVGLSS), 174-204 (TLFVGNGLVSMYGKCGFLSEARLVLDEMSRR), 205-239 (DVVSWNSLVVGYAQNQRFDDALEVCREMESVKISH), 240-272 (DAGTMASLLPAVSNTTTENVMYVKDMFFKMGKK), 273-307 (SLVSWNVMIGVYMKNAMPVEAVELYSRMEADGFEP), 308-342 (DAVSITSVLPACGDTSALSLGKKIHGYIERKKLIP), 343-373 (NLLLENALIDMYAKCGCLEKARDVFENMKSR), 374-408 (DVVSWTAMISAYGFSGRGCDAVALFSKLQDSGLVP), 409-439 (DSIAFVTTLAACSHAGLLEEGRSCFKLMTDH), and 445-475 (RLEHLACMVDLLGRAGKVKEAYRFIQDMSME). The tract at residues 480 to 555 (VWGALLGACR…NPGASNVEVN (76 aa)) is type E motif. The tract at residues 556–586 (RIIHTFLVGDRSHPQSDEIYRELDVLVKKMK) is type E(+) motif. Positions 587–686 (ELGYVPDSES…FGVCSCGDYW (100 aa)) are type DYW motif.

This sequence belongs to the PPR family. PCMP-H subfamily.

The sequence is that of Putative pentatricopeptide repeat-containing protein At3g49142 (PCMP-H77) from Arabidopsis thaliana (Mouse-ear cress).